A 623-amino-acid chain; its full sequence is EIN3-binding F-box protein 2 (623 aa).

Residues 52 to 106 (QTSIDVLPEECLFEILRRLPSGQERSACACVSKHWLNLLSSISRSEVNESSVQDV) enclose the F-box domain. LRR repeat units follow at residues 119-147 (GKKA…QIRG), 151-176 (ESKV…SLWN), 177-202 (LPAV…DLSR), 203-228 (CPGI…TIDS), 229-254 (CSGV…SIRS), 255-281 (CPRI…KLQM), 307-334 (LQGV…SVMS), 335-360 (CRGM…SLNK), 361-386 (CLLV…KLEE), 387-413 (CHRI…SLAN), 414-441 (CLGI…SIRC), 442-467 (CPGF…ELCG), 468-494 (LNGV…NLSE), 495-521 (CINV…NLDG), 522-547 (CKNI…DISN), 548-574 (TLVS…SIGG), 575-600 (CSSI…NIQR), and 601-623 (CGRI…DILY).

Part of a SCF (SKP1-cullin-F-box) protein ligase complex. Interacts with CUL1, SKP1A/ASK1, SKP1B/ASK2, EIN3, and EIL1. Ubiquitous.

It localises to the nucleus. The protein operates within protein modification; protein ubiquitination. In terms of biological role, component of SCF(EBF1) E3 ubiquitin ligase complexes, which may mediate the ubiquitination and subsequent proteasomal degradation of target proteins (probably including EIN3 and EIL1). Regulator of the ethylene signaling cascade by modulating the stability of EIN3 and EIL1 proteins. In Arabidopsis thaliana (Mouse-ear cress), this protein is EIN3-binding F-box protein 2 (EBF2).